The chain runs to 250 residues: NAD(P)H-quinone oxidoreductase subunit K, chloroplastic (250 aa).

[4Fe-4S] cluster-binding residues include Cys-67, Cys-68, Cys-132, and Cys-163.

It belongs to the complex I 20 kDa subunit family. In terms of assembly, NDH is composed of at least 16 different subunits, 5 of which are encoded in the nucleus. [4Fe-4S] cluster is required as a cofactor.

The protein localises to the plastid. Its subcellular location is the chloroplast thylakoid membrane. The catalysed reaction is a plastoquinone + NADH + (n+1) H(+)(in) = a plastoquinol + NAD(+) + n H(+)(out). It catalyses the reaction a plastoquinone + NADPH + (n+1) H(+)(in) = a plastoquinol + NADP(+) + n H(+)(out). In terms of biological role, NDH shuttles electrons from NAD(P)H:plastoquinone, via FMN and iron-sulfur (Fe-S) centers, to quinones in the photosynthetic chain and possibly in a chloroplast respiratory chain. The immediate electron acceptor for the enzyme in this species is believed to be plastoquinone. Couples the redox reaction to proton translocation, and thus conserves the redox energy in a proton gradient. The chain is NAD(P)H-quinone oxidoreductase subunit K, chloroplastic from Adiantum capillus-veneris (Maidenhair fern).